A 220-amino-acid polypeptide reads, in one-letter code: Translation initiation factor 6 (220 aa).

It belongs to the eIF-6 family.

Functionally, binds to the 50S ribosomal subunit and prevents its association with the 30S ribosomal subunit to form the 70S initiation complex. The sequence is that of Translation initiation factor 6 from Methanoculleus marisnigri (strain ATCC 35101 / DSM 1498 / JR1).